Here is a 217-residue protein sequence, read N- to C-terminus: Cytidylate kinase (217 aa).

Residue 9-17 (GPAGAGKST) coordinates ATP.

Belongs to the cytidylate kinase family. Type 1 subfamily.

The protein resides in the cytoplasm. The enzyme catalyses CMP + ATP = CDP + ADP. It carries out the reaction dCMP + ATP = dCDP + ADP. This chain is Cytidylate kinase, found in Clostridium acetobutylicum (strain ATCC 824 / DSM 792 / JCM 1419 / IAM 19013 / LMG 5710 / NBRC 13948 / NRRL B-527 / VKM B-1787 / 2291 / W).